A 218-amino-acid chain; its full sequence is Chromophore lyase CpcT/CpeT 1 (218 aa).

It belongs to the CpcT/CpeT biliprotein lyase family.

Functionally, covalently attaches a chromophore to Cys residue(s) of phycobiliproteins. This chain is Chromophore lyase CpcT/CpeT 1, found in Synechococcus sp. (strain JA-3-3Ab) (Cyanobacteria bacterium Yellowstone A-Prime).